Reading from the N-terminus, the 209-residue chain is ATP-dependent Clp protease proteolytic subunit 2 (209 aa).

Ser-107 (nucleophile) is an active-site residue. Residue His-132 is part of the active site.

The protein belongs to the peptidase S14 family. Fourteen ClpP subunits assemble into 2 heptameric rings which stack back to back to give a disk-like structure with a central cavity, resembling the structure of eukaryotic proteasomes.

It localises to the cytoplasm. It carries out the reaction Hydrolysis of proteins to small peptides in the presence of ATP and magnesium. alpha-casein is the usual test substrate. In the absence of ATP, only oligopeptides shorter than five residues are hydrolyzed (such as succinyl-Leu-Tyr-|-NHMec, and Leu-Tyr-Leu-|-Tyr-Trp, in which cleavage of the -Tyr-|-Leu- and -Tyr-|-Trp bonds also occurs).. Functionally, cleaves peptides in various proteins in a process that requires ATP hydrolysis. Has a chymotrypsin-like activity. Plays a major role in the degradation of misfolded proteins. The chain is ATP-dependent Clp protease proteolytic subunit 2 from Corynebacterium jeikeium (strain K411).